We begin with the raw amino-acid sequence, 399 residues long: Chorismate synthase (399 aa).

Positions 40 and 46 each coordinate NADP(+). Residues 135–137 (RAS), 256–257 (QA), G301, 316–320 (KPIAT), and R342 each bind FMN.

Belongs to the chorismate synthase family. In terms of assembly, homotetramer. Requires FMNH2 as cofactor.

The catalysed reaction is 5-O-(1-carboxyvinyl)-3-phosphoshikimate = chorismate + phosphate. It functions in the pathway metabolic intermediate biosynthesis; chorismate biosynthesis; chorismate from D-erythrose 4-phosphate and phosphoenolpyruvate: step 7/7. Catalyzes the anti-1,4-elimination of the C-3 phosphate and the C-6 proR hydrogen from 5-enolpyruvylshikimate-3-phosphate (EPSP) to yield chorismate, which is the branch point compound that serves as the starting substrate for the three terminal pathways of aromatic amino acid biosynthesis. This reaction introduces a second double bond into the aromatic ring system. This is Chorismate synthase from Pseudarthrobacter chlorophenolicus (strain ATCC 700700 / DSM 12829 / CIP 107037 / JCM 12360 / KCTC 9906 / NCIMB 13794 / A6) (Arthrobacter chlorophenolicus).